The sequence spans 444 residues: N-succinylarginine dihydrolase (444 aa).

Residues 19–28 (SGLSVGNIAS), asparagine 110, and 137–138 (HR) contribute to the substrate site. Glutamate 174 is an active-site residue. Arginine 214 serves as a coordination point for substrate. The active site involves histidine 250. Residues aspartate 252 and asparagine 362 each coordinate substrate. The active-site Nucleophile is cysteine 368.

Belongs to the succinylarginine dihydrolase family. In terms of assembly, homodimer.

The catalysed reaction is N(2)-succinyl-L-arginine + 2 H2O + 2 H(+) = N(2)-succinyl-L-ornithine + 2 NH4(+) + CO2. It functions in the pathway amino-acid degradation; L-arginine degradation via AST pathway; L-glutamate and succinate from L-arginine: step 2/5. Catalyzes the hydrolysis of N(2)-succinylarginine into N(2)-succinylornithine, ammonia and CO(2). The chain is N-succinylarginine dihydrolase from Aliivibrio fischeri (strain MJ11) (Vibrio fischeri).